Consider the following 197-residue polypeptide: Sec-independent protein translocase protein TatB (197 aa).

Residues 1 to 21 traverse the membrane as a helical segment; it reads MFDIGFGELLLVMVLGLIVLG. The segment at 93-197 is disordered; the sequence is KRGYTETPSP…ASARQPSDSR (105 aa). 2 stretches are compositionally biased toward basic and acidic residues: residues 104–113 and 160–169; these read KSDDPKKSGD and NHNDGRHATS. Low complexity predominate over residues 180–197; sequence PEQSQPSAASARQPSDSR.

The protein belongs to the TatB family. As to quaternary structure, the Tat system comprises two distinct complexes: a TatABC complex, containing multiple copies of TatA, TatB and TatC subunits, and a separate TatA complex, containing only TatA subunits. Substrates initially bind to the TatABC complex, which probably triggers association of the separate TatA complex to form the active translocon.

Its subcellular location is the cell inner membrane. Part of the twin-arginine translocation (Tat) system that transports large folded proteins containing a characteristic twin-arginine motif in their signal peptide across membranes. Together with TatC, TatB is part of a receptor directly interacting with Tat signal peptides. TatB may form an oligomeric binding site that transiently accommodates folded Tat precursor proteins before their translocation. The chain is Sec-independent protein translocase protein TatB from Pectobacterium atrosepticum (strain SCRI 1043 / ATCC BAA-672) (Erwinia carotovora subsp. atroseptica).